Consider the following 264-residue polypeptide: tRNA pseudouridine synthase A (264 aa).

Aspartate 54 functions as the Nucleophile in the catalytic mechanism. Residue tyrosine 113 participates in substrate binding.

The protein belongs to the tRNA pseudouridine synthase TruA family. As to quaternary structure, homodimer.

The catalysed reaction is uridine(38/39/40) in tRNA = pseudouridine(38/39/40) in tRNA. Formation of pseudouridine at positions 38, 39 and 40 in the anticodon stem and loop of transfer RNAs. In Leptospira biflexa serovar Patoc (strain Patoc 1 / Ames), this protein is tRNA pseudouridine synthase A.